The chain runs to 135 residues: Congerin-1 (135 aa).

Ser-1 is subject to N-acetylserine. The Galectin domain occupies Gly-3–Glu-135. Residue Trp-70 to Ser-76 participates in a beta-D-galactoside binding.

As to quaternary structure, homodimer.

In terms of biological role, this protein binds beta-galactoside. Its physiological function is not yet known. This Conger myriaster (Conger eel) protein is Congerin-1.